Consider the following 175-residue polypeptide: Trafficking protein particle complex subunit 20 (175 aa).

This sequence belongs to the TRAPP small subunits family. Sedlin subfamily. As to quaternary structure, part of the multisubunit TRAPP (transport protein particle) I complex composed of BET3, BET5, TRS20, TRS23, TRS31 and TRS33. Part of the multisubunit TRAPP (transport protein particle) II complex composed of BET3, BET5, TRS20, TRS23, TRS31, TRS33, TRS65, TRS85, TRS120 and TRS130. Part of the multisubunit TRAPP (transport protein particle) III complex composed of BET3, BET5, TRS20, TRS23, TRS31, TRS33 and TRS85.

It is found in the golgi apparatus. The protein localises to the cis-Golgi network. Its subcellular location is the endoplasmic reticulum. It localises to the preautophagosomal structure. Component of the TRAPP I, TRAPP II and TRAPP III complexes which act as guanine nucleotide exchange factors (GEF) for YPT1. TRAPP I plays a key role in the late stages of endoplasmic reticulum to Golgi traffic. TRAPP II plays a role in intra-Golgi transport. TRAPP III plays a role in autophagosome formation. The protein is Trafficking protein particle complex subunit 20 (TRS20) of Saccharomyces cerevisiae (strain ATCC 204508 / S288c) (Baker's yeast).